Consider the following 245-residue polypeptide: Acyl-protein thioesterase 1 (245 aa).

Active-site charge relay system residues include S126, D182, and H214.

Belongs to the AB hydrolase superfamily. AB hydrolase 2 family.

Its subcellular location is the cytoplasm. It localises to the nucleus. The catalysed reaction is S-hexadecanoyl-L-cysteinyl-[protein] + H2O = L-cysteinyl-[protein] + hexadecanoate + H(+). Hydrolyzes fatty acids from S-acylated cysteine residues in proteins with a strong preference for palmitoylated G-alpha proteins over other acyl substrates. Mediates the deacylation of G-alpha proteins such as GPA1 in vivo, but has weak or no activity toward palmitoylated Ras proteins. Has weak lysophospholipase activity in vitro; however such activity may not exist in vivo. This chain is Acyl-protein thioesterase 1, found in Neurospora crassa (strain ATCC 24698 / 74-OR23-1A / CBS 708.71 / DSM 1257 / FGSC 987).